The chain runs to 258 residues: Indole-3-glycerol phosphate synthase (258 aa).

It belongs to the TrpC family.

The catalysed reaction is 1-(2-carboxyphenylamino)-1-deoxy-D-ribulose 5-phosphate + H(+) = (1S,2R)-1-C-(indol-3-yl)glycerol 3-phosphate + CO2 + H2O. Its pathway is amino-acid biosynthesis; L-tryptophan biosynthesis; L-tryptophan from chorismate: step 4/5. The polypeptide is Indole-3-glycerol phosphate synthase (Nautilia profundicola (strain ATCC BAA-1463 / DSM 18972 / AmH)).